The primary structure comprises 230 residues: Orotidine 5'-phosphate decarboxylase (230 aa).

Residues D11, K34, 61–70 (DLKLHDIPNT), T117, R179, Q188, G208, and R209 contribute to the substrate site. K63 (proton donor) is an active-site residue.

It belongs to the OMP decarboxylase family. Type 1 subfamily. As to quaternary structure, homodimer.

It catalyses the reaction orotidine 5'-phosphate + H(+) = UMP + CO2. It participates in pyrimidine metabolism; UMP biosynthesis via de novo pathway; UMP from orotate: step 2/2. Its function is as follows. Catalyzes the decarboxylation of orotidine 5'-monophosphate (OMP) to uridine 5'-monophosphate (UMP). This chain is Orotidine 5'-phosphate decarboxylase, found in Streptococcus sanguinis (strain SK36).